We begin with the raw amino-acid sequence, 351 residues long: C(7)-cyclitol 7-kinase (351 aa).

This sequence belongs to the ROK (NagC/XylR) family.

The enzyme catalyses valienone + ATP = valienone 7-phosphate + ADP + H(+). It carries out the reaction validone + ATP = validone 7-phosphate + ADP + H(+). Functionally, involved in the biosynthesis of the antifungal agent validamycin A. Catalyzes the phosphorylation of valienone and validone to their 7-phosphate derivatives. The protein is C(7)-cyclitol 7-kinase of Streptomyces hygroscopicus subsp. limoneus.